Reading from the N-terminus, the 561-residue chain is Putative transport protein KPK_3686 (561 aa).

Helical transmembrane passes span 8 to 28, 37 to 57, 66 to 86, 94 to 114, and 158 to 178; these read LLNGNYILLLFVVLALGLCLG, LGNSIGVLVVSLLLGQQHFAI, FMLFIFCVGVEAGPNFFSIFF, MLALVMVGSAMLIATVLGKVF, and HLSLGYALTYLVGLVSLIVGA. RCK C-terminal domains lie at 202–288 and 292–373; these read LDTD…SFRN and VFDR…RIGF. Transmembrane regions (helical) follow at residues 383–403, 406–426, 447–467, 478–498, and 540–560; these read LLAFCAFFIVGLMIGMITFQF, FSFGIGNAAGLLFAGIMLGFL, FGLMVFMAGVGLSAGAGINNG, AGLIVSLLPVVICFLFGAYVL, and AIANVLLTLAGTLIVIIWPGL.

This sequence belongs to the AAE transporter (TC 2.A.81) family. YbjL subfamily.

It localises to the cell membrane. The polypeptide is Putative transport protein KPK_3686 (Klebsiella pneumoniae (strain 342)).